A 156-amino-acid polypeptide reads, in one-letter code: Small ribosomal subunit protein uS7 (156 aa).

The protein belongs to the universal ribosomal protein uS7 family. As to quaternary structure, part of the 30S ribosomal subunit. Contacts proteins S9 and S11.

Its function is as follows. One of the primary rRNA binding proteins, it binds directly to 16S rRNA where it nucleates assembly of the head domain of the 30S subunit. Is located at the subunit interface close to the decoding center, probably blocks exit of the E-site tRNA. The sequence is that of Small ribosomal subunit protein uS7 from Mannheimia succiniciproducens (strain KCTC 0769BP / MBEL55E).